We begin with the raw amino-acid sequence, 241 residues long: NH(3)-dependent NAD(+) synthetase (241 aa).

29–36 (GISGGIDS) provides a ligand contact to ATP. A Mg(2+)-binding site is contributed by Asp35. Arg110 provides a ligand contact to deamido-NAD(+). Residue Glu135 participates in Mg(2+) binding. 2 residues coordinate deamido-NAD(+): Lys143 and Asp150. Lys159 and Ser181 together coordinate ATP. 226 to 227 (HK) provides a ligand contact to deamido-NAD(+).

This sequence belongs to the NAD synthetase family. As to quaternary structure, homodimer.

It carries out the reaction deamido-NAD(+) + NH4(+) + ATP = AMP + diphosphate + NAD(+) + H(+). The protein operates within cofactor biosynthesis; NAD(+) biosynthesis; NAD(+) from deamido-NAD(+) (ammonia route): step 1/1. In terms of biological role, catalyzes the ATP-dependent amidation of deamido-NAD to form NAD. Uses ammonia as a nitrogen source. This chain is NH(3)-dependent NAD(+) synthetase, found in Finegoldia magna (strain ATCC 29328 / DSM 20472 / WAL 2508) (Peptostreptococcus magnus).